Here is a 689-residue protein sequence, read N- to C-terminus: Glycine--tRNA ligase beta subunit (689 aa).

The protein belongs to the class-II aminoacyl-tRNA synthetase family. In terms of assembly, tetramer of two alpha and two beta subunits.

Its subcellular location is the cytoplasm. It carries out the reaction tRNA(Gly) + glycine + ATP = glycyl-tRNA(Gly) + AMP + diphosphate. The sequence is that of Glycine--tRNA ligase beta subunit from Salmonella paratyphi C (strain RKS4594).